Here is a 234-residue protein sequence, read N- to C-terminus: MKCVVSRADDLKRMLDLSDVPTKSQGEQDAGVLILLHDDGSEKLKVLLCVRSRQLRRHPGEVCFPGGMMDDEDGQNVRRTAIREAYEEVGVNENDDYLVLGNLPAFRARFGVLIHPTVALLRRPPTFVLSIGEVESIFWIPLSQFLEDTHHSTFLIDEFYMVHVFQFDEYPTTYGVTALMCIVVAIGLLGKLPNFNLMGNLTISDMLDKHLDSIEIIRHVYEFASRKFEPKSKI.

Residues E27 to V162 enclose the Nudix hydrolase domain. A Nudix box motif is present at residues G66–G90. Residues E84 and E88 each coordinate Mg(2+). The chain crosses the membrane as a helical span at residues Y170–G190. The Microbody targeting signal motif lies at S232–I234.

The protein belongs to the Nudix hydrolase family. Mg(2+) serves as cofactor. Mn(2+) is required as a cofactor.

It localises to the peroxisome membrane. In terms of biological role, coenzyme A diphosphatase which mediates the cleavage of CoA into 3',5'-ADP and 4'-phosphopantetheine. The protein is Peroxisomal coenzyme A diphosphatase ndx-8 (ndx-8) of Caenorhabditis elegans.